Here is a 137-residue protein sequence, read N- to C-terminus: MTETTITTSDNVEKYGEREIRDAQLITFPNPRPGRRYDVHITLPEFTCKCPFSGYPDFATLYLTYCPDQKVVELKSIKLYINSYRDRHIPHEEVTNQILDDFVAVANPLYARLKADFNPRGNVHTVIEVEYHQEKAS.

The Thioimide intermediate role is filled by C50. D57 (proton donor) is an active-site residue. Residues 72-74 and 91-92 each bind substrate; these read VEL and HE.

The protein belongs to the GTP cyclohydrolase I family. QueF type 1 subfamily.

The protein localises to the cytoplasm. It carries out the reaction 7-aminomethyl-7-carbaguanine + 2 NADP(+) = 7-cyano-7-deazaguanine + 2 NADPH + 3 H(+). The protein operates within tRNA modification; tRNA-queuosine biosynthesis. Functionally, catalyzes the NADPH-dependent reduction of 7-cyano-7-deazaguanine (preQ0) to 7-aminomethyl-7-deazaguanine (preQ1). The polypeptide is NADPH-dependent 7-cyano-7-deazaguanine reductase (Synechocystis sp. (strain ATCC 27184 / PCC 6803 / Kazusa)).